The following is a 159-amino-acid chain: Transcriptional repressor NrdR (159 aa).

The segment at 3 to 34 is a zinc-finger region; sequence CPFCRHDDTQVVDSRVSEDGAAIRRRRRCSAC. Residues 49–139 enclose the ATP-cone domain; it reads PAVVKKDGSR…VYRRFEDVSE (91 aa).

The protein belongs to the NrdR family. Requires Zn(2+) as cofactor.

Its function is as follows. Negatively regulates transcription of bacterial ribonucleotide reductase nrd genes and operons by binding to NrdR-boxes. The chain is Transcriptional repressor NrdR from Burkholderia thailandensis (strain ATCC 700388 / DSM 13276 / CCUG 48851 / CIP 106301 / E264).